A 305-amino-acid polypeptide reads, in one-letter code: UDP-N-acetylenolpyruvoylglucosamine reductase 2 (305 aa).

Positions 33–197 constitute an FAD-binding PCMH-type domain; the sequence is VGGKADVFVA…LEARFELEEG (165 aa). Arginine 176 is an active-site residue. Serine 226 functions as the Proton donor in the catalytic mechanism. The active site involves glutamate 296.

It belongs to the MurB family. Requires FAD as cofactor.

It localises to the cytoplasm. It catalyses the reaction UDP-N-acetyl-alpha-D-muramate + NADP(+) = UDP-N-acetyl-3-O-(1-carboxyvinyl)-alpha-D-glucosamine + NADPH + H(+). Its pathway is cell wall biogenesis; peptidoglycan biosynthesis. Cell wall formation. The protein is UDP-N-acetylenolpyruvoylglucosamine reductase 2 of Bacillus cereus (strain ZK / E33L).